Consider the following 138-residue polypeptide: Large ribosomal subunit protein uL16 (138 aa).

The segment covering 1–16 (MLIPKRVKYRRQHRPT) has biased composition (basic residues). The tract at residues 1 to 23 (MLIPKRVKYRRQHRPTRSGISKG) is disordered.

The protein belongs to the universal ribosomal protein uL16 family. As to quaternary structure, part of the 50S ribosomal subunit.

In terms of biological role, binds 23S rRNA and is also seen to make contacts with the A and possibly P site tRNAs. This chain is Large ribosomal subunit protein uL16, found in Corynebacterium glutamicum (strain R).